Reading from the N-terminus, the 301-residue chain is Haloalkane dehalogenase (301 aa).

The active-site Nucleophile is Asp-123. Asp-250 functions as the Proton donor in the catalytic mechanism. The active-site Proton acceptor is the His-279.

The protein belongs to the haloalkane dehalogenase family. Type 1 subfamily. Monomer.

It carries out the reaction 1-haloalkane + H2O = a halide anion + a primary alcohol + H(+). Catalyzes hydrolytic cleavage of carbon-halogen bonds in halogenated aliphatic compounds, leading to the formation of the corresponding primary alcohols, halide ions and protons. This is Haloalkane dehalogenase from Phenylobacterium zucineum (strain HLK1).